A 464-amino-acid polypeptide reads, in one-letter code: Chitotriosidase-1 (464 aa).

An N-terminal signal peptide occupies residues Met-1–Ala-21. Residues Ala-22–Pro-386 form the GH18 domain. An intrachain disulfide couples Cys-26 to Cys-51. Chitin contacts are provided by residues Glu-70–His-71 and Gly-97–Thr-100. Residue Glu-140 is the Proton donor of the active site. A chitin-binding site is contributed by Met-210–Asp-213. A disulfide bridge connects residues Cys-307 and Cys-368. The tract at residues Leu-385–Asn-416 is disordered. Residues Asp-415–Ser-464 form the Chitin-binding type-2 domain. Residues Cys-448 and Cys-461 are joined by a disulfide bond.

This sequence belongs to the glycosyl hydrolase 18 family. Chitinase class II subfamily. As to quaternary structure, monomer. In terms of tissue distribution, highly expressed in tongue, stomach, kidney, brain, skin, testis, and bone marrow. Low level of expression was found in lung, heart, spleen, small intestine, and liver. Not detectable in pancreas, salivary gland, large intestine, uterus, or peripheral blood mononuclear cells (PBMC).

It localises to the secreted. The protein localises to the lysosome. The enzyme catalyses Random endo-hydrolysis of N-acetyl-beta-D-glucosaminide (1-&gt;4)-beta-linkages in chitin and chitodextrins.. Its function is as follows. Degrades chitin, chitotriose and chitobiose. May participate in the defense against nematodes and other pathogens. In Mus musculus (Mouse), this protein is Chitotriosidase-1 (Chit1).